The primary structure comprises 1241 residues: DNA-directed RNA polymerase subunit beta (1241 aa).

The segment at 1186-1210 is disordered; the sequence is EDEIVPTAEKRSSNQDEEALELVDN. Positions 1200-1210 are enriched in acidic residues; that stretch reads QDEEALELVDN.

This sequence belongs to the RNA polymerase beta chain family. As to quaternary structure, the RNAP catalytic core consists of 2 alpha, 1 beta, 1 beta' and 1 omega subunit. When a sigma factor is associated with the core the holoenzyme is formed, which can initiate transcription.

It carries out the reaction RNA(n) + a ribonucleoside 5'-triphosphate = RNA(n+1) + diphosphate. Functionally, DNA-dependent RNA polymerase catalyzes the transcription of DNA into RNA using the four ribonucleoside triphosphates as substrates. This chain is DNA-directed RNA polymerase subunit beta, found in Clostridium novyi (strain NT).